A 509-amino-acid polypeptide reads, in one-letter code: Heat shock 70 kDa protein 14 (509 aa).

Belongs to the heat shock protein 70 family. In terms of assembly, component of ribosome-associated complex (RAC), a heterodimer composed of Hsp70/DnaK-type chaperone HSPA14 and Hsp40/DnaJ-type chaperone DNAJC2.

It localises to the cytoplasm. The protein localises to the cytosol. Component of the ribosome-associated complex (RAC), a complex involved in folding or maintaining nascent polypeptides in a folding-competent state. In the RAC complex, binds to the nascent polypeptide chain, while DNAJC2 stimulates its ATPase activity. In Macaca fascicularis (Crab-eating macaque), this protein is Heat shock 70 kDa protein 14 (HSPA14).